A 455-amino-acid chain; its full sequence is Ectonucleoside triphosphate diphosphohydrolase 6 (455 aa).

Residues 1–12 lie on the Cytoplasmic side of the membrane; that stretch reads MRKIPNHGTLRM. A helical transmembrane segment spans residues 13-32; that stretch reads TKVAYPLGLCVGLFIYVAYI. Over 33 to 455 the chain is Lumenal; the sequence is KWHRASAAQA…SLKRQKVPAL (423 aa). E196 functions as the Proton acceptor in the catalytic mechanism. 2 cysteine pairs are disulfide-bonded: C297–C327 and C387–C401.

This sequence belongs to the GDA1/CD39 NTPase family. Mg(2+) is required as a cofactor. The cofactor is Ca(2+). Post-translationally, N-glycosylated.

It localises to the golgi apparatus membrane. The protein resides in the secreted. The protein localises to the cell membrane. It carries out the reaction a ribonucleoside 5'-diphosphate + H2O = a ribonucleoside 5'-phosphate + phosphate + H(+). The catalysed reaction is IDP + H2O = IMP + phosphate + H(+). It catalyses the reaction GDP + H2O = GMP + phosphate + H(+). The enzyme catalyses UDP + H2O = UMP + phosphate + H(+). In terms of biological role, catalyzes the hydrolysis of nucleoside triphosphates and diphosphates in a calcium- or magnesium-dependent manner. Has a strong preference for nucleoside diphosphates, preferentially hydrolyzes GDP, IDP, and UDP, with slower hydrolysis of CDP, ITP, GTP, CTP, ADP, and UTP and virtually no hydrolysis of ATP. The membrane bound form might support glycosylation reactions in the Golgi apparatus and, when released from cells, might catalyze the hydrolysis of extracellular nucleotides. In Mus musculus (Mouse), this protein is Ectonucleoside triphosphate diphosphohydrolase 6.